We begin with the raw amino-acid sequence, 716 residues long: Probable calcium-binding mitochondrial carrier K02F3.2 (716 aa).

The interval Met-1–Pro-345 is N-terminal domain. EF-hand domains follow at residues Tyr-93–Phe-121, Ser-127–Leu-162, Gln-165–Leu-195, and Phe-198–His-233. Ca(2+) is bound by residues Asp-106, Thr-108, Asp-110, Glu-117, Asp-140, Asn-142, Ser-144, Thr-146, and Glu-151. 5 residues coordinate Ca(2+): Asp-211, Asn-213, Asn-215, Thr-217, and Asp-222. A linker loop domain region spans residues Glu-346–Ala-362. The tract at residues Gly-372–Ser-664 is carrier domain. Solcar repeat units follow at residues Leu-376 to Lys-468, Ile-475 to Ala-560, and Asn-568 to Leu-656. 6 helical membrane passes run Phe-382 to Ile-399, Gly-443 to Asn-462, Gly-485 to Leu-498, Gly-535 to Tyr-554, Phe-574 to Ala-591, and Gly-631 to Tyr-650. A C-terminal domain region spans residues Arg-665–Lys-716.

It belongs to the mitochondrial carrier (TC 2.A.29) family. In terms of assembly, homodimer (via N-terminus).

It localises to the mitochondrion inner membrane. Functionally, mitochondrial and calcium-binding carrier that catalyzes the calcium-dependent exchange of cytoplasmic glutamate with mitochondrial aspartate across the mitochondrial inner membrane. This Caenorhabditis elegans protein is Probable calcium-binding mitochondrial carrier K02F3.2.